The chain runs to 294 residues: ATP phosphoribosyltransferase (294 aa).

This sequence belongs to the ATP phosphoribosyltransferase family. Long subfamily. Mg(2+) serves as cofactor.

Its subcellular location is the cytoplasm. It catalyses the reaction 1-(5-phospho-beta-D-ribosyl)-ATP + diphosphate = 5-phospho-alpha-D-ribose 1-diphosphate + ATP. It participates in amino-acid biosynthesis; L-histidine biosynthesis; L-histidine from 5-phospho-alpha-D-ribose 1-diphosphate: step 1/9. Its activity is regulated as follows. Feedback inhibited by histidine. Functionally, catalyzes the condensation of ATP and 5-phosphoribose 1-diphosphate to form N'-(5'-phosphoribosyl)-ATP (PR-ATP). Has a crucial role in the pathway because the rate of histidine biosynthesis seems to be controlled primarily by regulation of HisG enzymatic activity. This Chlorobium phaeovibrioides (strain DSM 265 / 1930) (Prosthecochloris vibrioformis (strain DSM 265)) protein is ATP phosphoribosyltransferase.